The sequence spans 96 residues: Small ribosomal subunit protein bS6 (96 aa).

It belongs to the bacterial ribosomal protein bS6 family.

In terms of biological role, binds together with bS18 to 16S ribosomal RNA. This is Small ribosomal subunit protein bS6 from Streptococcus thermophilus (strain ATCC BAA-491 / LMD-9).